Consider the following 456-residue polypeptide: Bifunctional protein GlmU (456 aa).

Positions 1–229 (MTKKALSAVI…VMEVEGANNR (229 aa)) are pyrophosphorylase. UDP-N-acetyl-alpha-D-glucosamine contacts are provided by residues 11 to 14 (LAAG), Lys25, Gln76, 81 to 82 (GT), 103 to 105 (YGD), Gly140, Glu154, Asn169, and Asn227. Mg(2+) is bound at residue Asp105. Asn227 is a binding site for Mg(2+). The linker stretch occupies residues 230-250 (LQLAALERYLQNKQASKLLLE). The interval 251–456 (GVMIYDPARF…QGWQRPIKKK (206 aa)) is N-acetyltransferase. Residues Arg333 and Lys351 each contribute to the UDP-N-acetyl-alpha-D-glucosamine site. Catalysis depends on His363, which acts as the Proton acceptor. Residues Tyr366 and Asn377 each contribute to the UDP-N-acetyl-alpha-D-glucosamine site. Acetyl-CoA contacts are provided by residues Ala380, 386–387 (NY), Ser405, Ala423, and Arg440.

In the N-terminal section; belongs to the N-acetylglucosamine-1-phosphate uridyltransferase family. This sequence in the C-terminal section; belongs to the transferase hexapeptide repeat family. As to quaternary structure, homotrimer. Requires Mg(2+) as cofactor.

The protein resides in the cytoplasm. It catalyses the reaction alpha-D-glucosamine 1-phosphate + acetyl-CoA = N-acetyl-alpha-D-glucosamine 1-phosphate + CoA + H(+). It carries out the reaction N-acetyl-alpha-D-glucosamine 1-phosphate + UTP + H(+) = UDP-N-acetyl-alpha-D-glucosamine + diphosphate. It functions in the pathway nucleotide-sugar biosynthesis; UDP-N-acetyl-alpha-D-glucosamine biosynthesis; N-acetyl-alpha-D-glucosamine 1-phosphate from alpha-D-glucosamine 6-phosphate (route II): step 2/2. Its pathway is nucleotide-sugar biosynthesis; UDP-N-acetyl-alpha-D-glucosamine biosynthesis; UDP-N-acetyl-alpha-D-glucosamine from N-acetyl-alpha-D-glucosamine 1-phosphate: step 1/1. It participates in bacterial outer membrane biogenesis; LPS lipid A biosynthesis. Functionally, catalyzes the last two sequential reactions in the de novo biosynthetic pathway for UDP-N-acetylglucosamine (UDP-GlcNAc). The C-terminal domain catalyzes the transfer of acetyl group from acetyl coenzyme A to glucosamine-1-phosphate (GlcN-1-P) to produce N-acetylglucosamine-1-phosphate (GlcNAc-1-P), which is converted into UDP-GlcNAc by the transfer of uridine 5-monophosphate (from uridine 5-triphosphate), a reaction catalyzed by the N-terminal domain. The chain is Bifunctional protein GlmU from Haemophilus influenzae (strain PittGG).